Here is a 364-residue protein sequence, read N- to C-terminus: MRKRISAIINKLNISIMMMIVVLMIGCGQQPEAGKTGAAGGEKQGAGSLSEVLMEVGKSAENAFYSFLELVSDTLGFTAKSTTKKEDVGGYFNSLGGKLGEASNELEQVAKNSEAGIEKNDASKNPIRSAVNAAKKTLEALKGYLDSLGTVGDSNPVGWASNNAQGAAVDEAELKKAYKALKGIMDTAEGAGVARPEVGNIAVKVGNGTDNKDGAKILATDGAAAVGDAGKAAAILTTVSGKEMLASIVNSTEDKAVKITGNVTVETTPLEFAVGGNGAHLSQNANSKAAAVAGGIALRSLVKGGKLAADNNDDDKASQGVGITAANKLLVAVEDIIKKTVKNVLEKAKGEIDKARDPKPAGQQ.

The N-terminal stretch at 1-26 is a signal peptide; the sequence is MRKRISAIINKLNISIMMMIVVLMIG. The N-palmitoyl cysteine moiety is linked to residue cysteine 27. Residue cysteine 27 is the site of S-diacylglycerol cysteine attachment.

It belongs to the variable large protein (Vlp) family. Alpha subfamily.

The protein resides in the cell outer membrane. The Vlp and Vsp proteins are antigenically distinct proteins, only one vlp or vsp gene is transcriptionally active at any one time. Switching between these genes is a mechanism of host immune response evasion. This Borrelia hermsii protein is Variable large protein 21.